A 310-amino-acid chain; its full sequence is tRNA pseudouridine synthase B (310 aa).

Residue aspartate 49 is the Nucleophile of the active site.

Belongs to the pseudouridine synthase TruB family. Type 1 subfamily.

The enzyme catalyses uridine(55) in tRNA = pseudouridine(55) in tRNA. In terms of biological role, responsible for synthesis of pseudouridine from uracil-55 in the psi GC loop of transfer RNAs. This Idiomarina loihiensis (strain ATCC BAA-735 / DSM 15497 / L2-TR) protein is tRNA pseudouridine synthase B.